The following is a 295-amino-acid chain: Protoheme IX farnesyltransferase (295 aa).

9 helical membrane passes run 27–46 (IMYL…PGSI), 50–72 (IAII…NMWY), 93–115 (ISKS…VMMI), 119–136 (YISG…SFAY), 148–168 (IVIG…SVTS), 175–195 (LILF…LSLL), 219–239 (VHIL…GLFL), 244–264 (LYEI…FKVF), and 275–295 (MFTY…LASF).

It belongs to the UbiA prenyltransferase family. Protoheme IX farnesyltransferase subfamily.

The protein localises to the cell inner membrane. It carries out the reaction heme b + (2E,6E)-farnesyl diphosphate + H2O = Fe(II)-heme o + diphosphate. Its pathway is porphyrin-containing compound metabolism; heme O biosynthesis; heme O from protoheme: step 1/1. Converts heme B (protoheme IX) to heme O by substitution of the vinyl group on carbon 2 of heme B porphyrin ring with a hydroxyethyl farnesyl side group. The chain is Protoheme IX farnesyltransferase from Ehrlichia canis (strain Jake).